We begin with the raw amino-acid sequence, 322 residues long: PIH1 domain-containing protein 2 (322 aa).

Belongs to the PIH1 family.

In Danio rerio (Zebrafish), this protein is PIH1 domain-containing protein 2 (pih1d2).